The chain runs to 430 residues: Asparagine--tRNA ligase (430 aa).

The protein belongs to the class-II aminoacyl-tRNA synthetase family. Homodimer.

The protein resides in the cytoplasm. It catalyses the reaction tRNA(Asn) + L-asparagine + ATP = L-asparaginyl-tRNA(Asn) + AMP + diphosphate + H(+). This Staphylococcus aureus (strain MRSA252) protein is Asparagine--tRNA ligase.